Consider the following 576-residue polypeptide: 2-succinyl-5-enolpyruvyl-6-hydroxy-3-cyclohexene-1-carboxylate synthase (576 aa).

Belongs to the TPP enzyme family. MenD subfamily. Homodimer. Mg(2+) is required as a cofactor. The cofactor is Mn(2+). Thiamine diphosphate serves as cofactor.

The catalysed reaction is isochorismate + 2-oxoglutarate + H(+) = 5-enolpyruvoyl-6-hydroxy-2-succinyl-cyclohex-3-ene-1-carboxylate + CO2. It functions in the pathway quinol/quinone metabolism; 1,4-dihydroxy-2-naphthoate biosynthesis; 1,4-dihydroxy-2-naphthoate from chorismate: step 2/7. Its pathway is quinol/quinone metabolism; menaquinone biosynthesis. Its function is as follows. Catalyzes the thiamine diphosphate-dependent decarboxylation of 2-oxoglutarate and the subsequent addition of the resulting succinic semialdehyde-thiamine pyrophosphate anion to isochorismate to yield 2-succinyl-5-enolpyruvyl-6-hydroxy-3-cyclohexene-1-carboxylate (SEPHCHC). The sequence is that of 2-succinyl-5-enolpyruvyl-6-hydroxy-3-cyclohexene-1-carboxylate synthase from Aliivibrio fischeri (strain ATCC 700601 / ES114) (Vibrio fischeri).